Reading from the N-terminus, the 714-residue chain is BBSome complex member bbs-2 (714 aa).

2 coiled-coil regions span residues 332–361 and 597–627; these read IREF…VEKD and MTEV…DSIA.

As to quaternary structure, part of BBSome complex, that contains at least bbs-1, bbs-2, bbs-4, bbs-5, osm-12, bbs-8/ttc-8 and bbs-9. As to expression, expressed in ciliated cells including amphid and both inner and outer labial neurons of the head and in both phasmid neurons PHA and PHB in the tail at larval stages L1 and L2.

Its subcellular location is the cell projection. It localises to the cilium. The protein localises to the cytoplasm. It is found in the cytoskeleton. The protein resides in the cilium basal body. Its subcellular location is the cilium axoneme. In terms of biological role, component of the BBSome complex. The BBSome complex is thought to function as a coat complex required for sorting of specific membrane proteins to the primary cilia. The BBSome complex is required for ciliogenesis but is dispensable for centriolar satellite function. Required for proper BBSome complex assembly and its ciliary localization. Required for cilia biogenesis and both the assembly and movement of intraflagellar transport proteins along the ciliary axoneme. The sequence is that of BBSome complex member bbs-2 from Caenorhabditis elegans.